A 140-amino-acid polypeptide reads, in one-letter code: Protein S40-1 (140 aa).

The interval 16–58 (YFPIRRREDGNEKENNRPVDFRENSERVWNKSSRRSKTTPLPS) is disordered. Residues 20-44 (RRREDGNEKENNRPVDFRENSERVW) are compositionally biased toward basic and acidic residues.

Belongs to the senescence regulator S40 family.

The protein resides in the cytoplasm. In Arabidopsis thaliana (Mouse-ear cress), this protein is Protein S40-1.